Consider the following 115-residue polypeptide: Large ribosomal subunit protein bL20 (115 aa).

Belongs to the bacterial ribosomal protein bL20 family.

Functionally, binds directly to 23S ribosomal RNA and is necessary for the in vitro assembly process of the 50S ribosomal subunit. It is not involved in the protein synthesizing functions of that subunit. The protein is Large ribosomal subunit protein bL20 of Parasynechococcus marenigrum (strain WH8102).